We begin with the raw amino-acid sequence, 671 residues long: MKSEGESGPFQGILRDIEGRRKCYKQDWIRGIKTGIRILAPTCYIFFASSLPVVAFGEQLSKHTGGALSAVETLASTSICGIIHAIFGGQPLLIVGVAEPTIIMYTYLYSFCISRPDIGRELYLAWVAWVCVWTSVLLILLSIFNAGTIITRFTRIAGELFGMLIAVLFLQEAIKGLISEFHAPEIKNQETGKSHFLLIYANGLLAVIFSLGLLITALKSRRAKSWKYGFGWLRSFIGDYGVPLMVLLWTALSYTVPSEVLPSVPRRLFCPLPWEPASLYHWTVVKDMGKVPIMYILAAFIPGVMIAGLYFFDHSVASQMAQQKEFNLKNPSAYHYDIFLLGIITLICGLLGLPPSNGVLPQAPMHTKSLAVLNRQLIRKKMVKKAKECMKMKASKSEIYGRMQSVFIEMETSPPQDNSVATDLKELKEVVMRPDEGGDTKGKFDPDVHIEANLPVRVNEQRVSNLLQSVLVGLTLLAVTVIKMIPSSVLWGYFAYMAIDSLPGNQFWERLLLLFIPPSRLFKVLEGVHASFVELVPYRVIVTFTLFQLVYFLLCYGMTWIPMAGIFFPALFFLLISIREHLLPKLFDMQHLQVLDASDYEEIVAAPIQHSSFAYRKLGSSHHLSEGEDEFYDAEILDEMTTSRGEIRIRTISFKEVHPEPEEKHVTFEPH.

Over 1–37 (MKSEGESGPFQGILRDIEGRRKCYKQDWIRGIKTGIR) the chain is Cytoplasmic. The helical transmembrane segment at 38–58 (ILAPTCYIFFASSLPVVAFGE) threads the bilayer. Residues 59–77 (QLSKHTGGALSAVETLAST) lie on the Extracellular side of the membrane. A helical membrane pass occupies residues 78–98 (SICGIIHAIFGGQPLLIVGVA). The Cytoplasmic segment spans residues 99-123 (EPTIIMYTYLYSFCISRPDIGRELY). A helical membrane pass occupies residues 124–144 (LAWVAWVCVWTSVLLILLSIF). Residues 145–157 (NAGTIITRFTRIA) are Extracellular-facing. A helical transmembrane segment spans residues 158–178 (GELFGMLIAVLFLQEAIKGLI). At 179-195 (SEFHAPEIKNQETGKSH) the chain is on the cytoplasmic side. Residues 196-216 (FLLIYANGLLAVIFSLGLLIT) traverse the membrane as a helical segment. The Extracellular segment spans residues 217-235 (ALKSRRAKSWKYGFGWLRS). Residues 236–256 (FIGDYGVPLMVLLWTALSYTV) traverse the membrane as a helical segment. The Cytoplasmic portion of the chain corresponds to 257–291 (PSEVLPSVPRRLFCPLPWEPASLYHWTVVKDMGKV). The chain crosses the membrane as a helical span at residues 292–312 (PIMYILAAFIPGVMIAGLYFF). Residues 313–332 (DHSVASQMAQQKEFNLKNPS) are Extracellular-facing. The chain crosses the membrane as a helical span at residues 333-353 (AYHYDIFLLGIITLICGLLGL). Over 354-469 (PPSNGVLPQA…EQRVSNLLQS (116 aa)) the chain is Cytoplasmic. The helical transmembrane segment at 470–490 (VLVGLTLLAVTVIKMIPSSVL) threads the bilayer. Over 491–557 (WGYFAYMAID…QLVYFLLCYG (67 aa)) the chain is Extracellular. The helical transmembrane segment at 558–578 (MTWIPMAGIFFPALFFLLISI) threads the bilayer. Over 579–671 (REHLLPKLFD…EEKHVTFEPH (93 aa)) the chain is Cytoplasmic.

It belongs to the anion exchanger (TC 2.A.31.3) family.

It localises to the membrane. Its function is as follows. Probable boron transporter. Boron is essential for maintaining the integrity of plants cell walls. The chain is Probable boron transporter 6 (BOR6) from Arabidopsis thaliana (Mouse-ear cress).